Consider the following 192-residue polypeptide: Xanthine phosphoribosyltransferase (192 aa).

The xanthine site is built by leucine 20 and asparagine 27. Position 128–132 (128–132 (ANGDA)) interacts with 5-phospho-alpha-D-ribose 1-diphosphate. Lysine 156 lines the xanthine pocket.

Belongs to the purine/pyrimidine phosphoribosyltransferase family. Xpt subfamily. Homodimer.

It is found in the cytoplasm. The catalysed reaction is XMP + diphosphate = xanthine + 5-phospho-alpha-D-ribose 1-diphosphate. It functions in the pathway purine metabolism; XMP biosynthesis via salvage pathway; XMP from xanthine: step 1/1. In terms of biological role, converts the preformed base xanthine, a product of nucleic acid breakdown, to xanthosine 5'-monophosphate (XMP), so it can be reused for RNA or DNA synthesis. The sequence is that of Xanthine phosphoribosyltransferase from Staphylococcus aureus (strain bovine RF122 / ET3-1).